The primary structure comprises 507 residues: WD repeat-containing protein fzy-1 (507 aa).

2 disordered regions span residues 1–39 and 74–95; these read MNNK…NTNL and NKEN…SVEG. Polar residues-rich tracts occupy residues 15-24 and 74-86; these read VRSSAQQNGL and NKEN…SEPN. 4 WD repeats span residues 219–258, 313–352, 364–406, and 411–450; these read TNEG…TTEY, GHCR…GSTV, EHTG…QKVR, and CETG…KLSH.

Belongs to the WD repeat CDC20/Fizzy family.

It localises to the chromosome. It is found in the cytoplasm. Its function is as follows. Plays a role in metaphase-anaphase transition during meiosis I. Required for embryonic anterior-posterior axis formation. This Caenorhabditis elegans protein is WD repeat-containing protein fzy-1.